Here is a 112-residue protein sequence, read N- to C-terminus: Probable head completion protein 2 (112 aa).

This sequence belongs to the skunalikevirus head completion protein 2 family.

It localises to the virion. In terms of biological role, probably functions as a stopper that is part of the head-tail connector and that locks the viral DNA in the capsid. During assembly, functions as a docking platform which the preassembled tail can bind to. Plays a role in morphogenesis of the virion capsid after genome packaging. The polypeptide is Probable head completion protein 2 (Lactococcus phage p2 (Lactococcus lactis bacteriophage p2)).